The chain runs to 209 residues: Large ribosomal subunit protein uL3 (209 aa).

Gln150 bears the N5-methylglutamine mark.

This sequence belongs to the universal ribosomal protein uL3 family. As to quaternary structure, part of the 50S ribosomal subunit. Forms a cluster with proteins L14 and L19. Methylated by PrmB.

One of the primary rRNA binding proteins, it binds directly near the 3'-end of the 23S rRNA, where it nucleates assembly of the 50S subunit. This chain is Large ribosomal subunit protein uL3, found in Vibrio parahaemolyticus serotype O3:K6 (strain RIMD 2210633).